We begin with the raw amino-acid sequence, 1175 residues long: Pyruvate carboxylase (1175 aa).

The region spanning Asn22–Ser474 is the Biotin carboxylation domain. Positions 140, 224, and 259 each coordinate ATP. An ATP-grasp domain is found at Arg144 to Ala341. Residue Arg316 is part of the active site. A Pyruvate carboxyltransferase domain is found at Cys561 to Arg828. Substrate contacts are provided by residues Arg569–Gln573 and Arg642. Residue Asp570 coordinates a divalent metal cation. Positions 738, 768, and 770 each coordinate a divalent metal cation. Lys738 is modified (N6-carboxylysine). Thr902 provides a ligand contact to substrate. The region spanning Lys1099–Thr1174 is the Biotinyl-binding domain. An N6-biotinyllysine modification is found at Lys1140.

The cofactor is biotin. Zn(2+) serves as cofactor.

It is found in the cytoplasm. The catalysed reaction is hydrogencarbonate + pyruvate + ATP = oxaloacetate + ADP + phosphate + H(+). The protein operates within carbohydrate biosynthesis; gluconeogenesis. Pyruvate carboxylase catalyzes a 2-step reaction, involving the ATP-dependent carboxylation of the covalently attached biotin in the first step and the transfer of the carboxyl group to pyruvate in the second. The chain is Pyruvate carboxylase (PYC) from Pichia angusta (Yeast).